The following is a 519-amino-acid chain: Galactose-1-phosphate uridylyltransferase (519 aa).

Belongs to the galactose-1-phosphate uridylyltransferase type 2 family.

The protein resides in the cytoplasm. It catalyses the reaction alpha-D-galactose 1-phosphate + UDP-alpha-D-glucose = alpha-D-glucose 1-phosphate + UDP-alpha-D-galactose. Its pathway is carbohydrate metabolism; galactose metabolism. The sequence is that of Galactose-1-phosphate uridylyltransferase from Caldanaerobacter subterraneus subsp. tengcongensis (strain DSM 15242 / JCM 11007 / NBRC 100824 / MB4) (Thermoanaerobacter tengcongensis).